The chain runs to 99 residues: PE family protein PE13 (99 aa).

A PE domain is found at 1–93 (MSFVMAYPEM…ASSYAATEVA (93 aa)).

This sequence belongs to the mycobacterial PE family.

It is found in the secreted. The protein resides in the cell wall. In terms of biological role, may play a pivotal role in the interaction between M.tuberculosis and host. Can enhance the survival within macrophages under stress conditions such as H(2)O(2), SDS and low pH. Increases the production of IL-6 and IL-1beta from macrophages, and decreases the secretion of suppressor of cytokine signaling 3 (SOCS-3). These changes probably involve the p38-ERK-NF-kappa-B signaling pathway. Also precipitates the macrophage death. The chain is PE family protein PE13 from Mycobacterium tuberculosis (strain ATCC 25618 / H37Rv).